The following is a 317-amino-acid chain: tRNA uridine(34) hydroxylase (317 aa).

The Rhodanese domain maps to 129 to 223 (TDPEVLLIDT…YLEEVPEQES (95 aa)). The active-site Cysteine persulfide intermediate is cysteine 183. The interval 298 to 317 (AKARNQPHPIGRNYRLPSEA) is disordered.

It belongs to the TrhO family.

It catalyses the reaction uridine(34) in tRNA + AH2 + O2 = 5-hydroxyuridine(34) in tRNA + A + H2O. Catalyzes oxygen-dependent 5-hydroxyuridine (ho5U) modification at position 34 in tRNAs. The polypeptide is tRNA uridine(34) hydroxylase (Pseudomonas syringae pv. tomato (strain ATCC BAA-871 / DC3000)).